A 361-amino-acid polypeptide reads, in one-letter code: Isopentenyl-diphosphate delta-isomerase (361 aa).

Position 12–13 (12–13) interacts with substrate; it reads RK. FMN contacts are provided by residues S70, 71-73, S101, and N130; that span reads SMT. Substrate is bound at residue 101 to 103; that stretch reads SMR. Q165 is a binding site for substrate. Residue E166 coordinates Mg(2+). Residues K197 and 310–311 each bind FMN; that span reads AG.

The protein belongs to the IPP isomerase type 2 family. As to quaternary structure, homooctamer. Dimer of tetramers. It depends on FMN as a cofactor. Requires NADPH as cofactor. Mg(2+) serves as cofactor.

The protein resides in the cytoplasm. The enzyme catalyses isopentenyl diphosphate = dimethylallyl diphosphate. Involved in the biosynthesis of isoprenoids. Catalyzes the 1,3-allylic rearrangement of the homoallylic substrate isopentenyl (IPP) to its allylic isomer, dimethylallyl diphosphate (DMAPP). The polypeptide is Isopentenyl-diphosphate delta-isomerase (Chlorobium luteolum (strain DSM 273 / BCRC 81028 / 2530) (Pelodictyon luteolum)).